The chain runs to 499 residues: Tyrosine-protein kinase Blk (499 aa).

Residues 1 to 34 form a disordered region; it reads MGLLSSKRQVSEKGKGWSPVKIRTQDKAPPPLPP. Gly2 carries the N-myristoyl glycine lipid modification. The 61-residue stretch at 52–112 folds into the SH3 domain; sequence EEERFVVALF…PSNFVAPVET (61 aa). Positions 118–214 constitute an SH2 domain; that stretch reads WFFRTISRKD…GLCQKLTLPC (97 aa). The Protein kinase domain maps to 235–488; it reads LKLVRKLGSG…FLQSVLEDFY (254 aa). ATP contacts are provided by residues 241 to 249 and Lys263; that span reads LGSGQFGEV. The active-site Proton acceptor is Asp354. A Phosphotyrosine; by autocatalysis modification is found at Tyr383.

This sequence belongs to the protein kinase superfamily. Tyr protein kinase family. SRC subfamily. In terms of assembly, interacts with CBL (via SH2 domain). Interacts with CD79A and CD79B (via SH2 domain). Post-translationally, phosphorylated on tyrosine residues after antibody-mediated surface engagement of the B-cell antigen receptor (BCR). Ubiquitination of activated BLK by the UBE3A ubiquitin protein ligase leads to its degradation by the ubiquitin-proteasome pathway. Expressed in immature Vgamma2 gamma-delta T-cells (at protein level). Expressed in the B-cell lineage.

The protein resides in the cell membrane. It catalyses the reaction L-tyrosyl-[protein] + ATP = O-phospho-L-tyrosyl-[protein] + ADP + H(+). Its activity is regulated as follows. Antibody-mediated surface engagement of the B-cell antigen receptor (BCR) which results in the phosphorylation of BLK on tyrosine residues, stimulates the enzymatic activity. In terms of biological role, non-receptor tyrosine kinase involved in B-lymphocyte development, differentiation and signaling. B-cell receptor (BCR) signaling requires a tight regulation of several protein tyrosine kinases and phosphatases, and associated coreceptors. Binding of antigen to the B-cell antigen receptor (BCR) triggers signaling that ultimately leads to B-cell activation. Signaling through BLK plays an important role in transmitting signals through surface immunoglobulins and supports the pro-B to pre-B transition, as well as the signaling for growth arrest and apoptosis downstream of B-cell receptor. Specifically binds and phosphorylates CD79A at 'Tyr-188'and 'Tyr-199', as well as CD79B at 'Tyr-196' and 'Tyr-207'. Also phosphorylates the immunoglobulin G receptor FCGR2. With FYN and LYN, plays an essential role in pre-B-cell receptor (pre-BCR)-mediated NF-kappa-B activation. Also contributes to BTK activation by indirectly stimulating BTK intramolecular autophosphorylation. In pancreatic islets, acts as a modulator of beta-cells function through the up-regulation of PDX1 and NKX6-1 and consequent stimulation of insulin secretion in response to glucose. Phosphorylates CGAS, promoting retention of CGAS in the cytosol. The polypeptide is Tyrosine-protein kinase Blk (Blk) (Mus musculus (Mouse)).